The following is a 223-amino-acid chain: MSQTAIIIWIVVIIILLVLGGLGAYFFYSRYRHRKNIPPTPINPPSSITPIQPINPPSSITPIQPSGPPSGGNHPIPASCPAYQLVNNKAITLVPLPADTSNVKNAQDCQNLCTQNPDCYFYNYVGLFDGCSLMQGTVDNNVMTGFAIRGSEDGCPKWARYNTSIQGFNTGNPSNVESEEKCQQLCQQNSSCDWYTYDIGKKTCTLNKAIDFNTSTLGIKMPH.

The signal sequence occupies residues 1 to 23; sequence MSQTAIIIWIVVIIILLVLGGLG. A disordered region spans residues 39 to 73; the sequence is PTPINPPSSITPIQPINPPSSITPIQPSGPPSGGN. The span at 45-64 shows a compositional bias: low complexity; sequence PSSITPIQPINPPSSITPIQ. PAN domains lie at 80 to 155 and 159 to 223; these read CPAY…EDGC and ARYN…KMPH. 2 cysteine pairs are disulfide-bonded: Cys80–Cys155 and Cys109–Cys131. Residues Asn162, Asn189, and Asn213 are each glycosylated (N-linked (GlcNAc...) asparagine; by host). The cysteines at positions 182 and 204 are disulfide-linked.

It is found in the secreted. Its subcellular location is the virion. The sequence is that of Putative PAN domain-containing protein R486 from Acanthamoeba polyphaga mimivirus (APMV).